Reading from the N-terminus, the 624-residue chain is Kelch-like protein diablo (624 aa).

Positions 1 to 21 (MGDPLLPGSTGLGSGPAAAAT) are enriched in low complexity. The segment at 1–55 (MGDPLLPGSTGLGSGPAAAATGGSGTTGTGLGSGGTSGAERPPSPARLTHTSEKH) is disordered. Gly residues predominate over residues 22 to 37 (GGSGTTGTGLGSGGTS). The BTB domain maps to 73-140 (CDVVLNVGGR…CYTAHIIVEE (68 aa)). The BACK domain occupies 175-277 (CLGIRAFADT…SPKFLVGTVG (103 aa)). 6 Kelch repeats span residues 324–370 (VLFA…VLND), 372–418 (LYAV…VLDG), 419–465 (FLYA…VLSG), 467–512 (LYAI…VFNN), 514–559 (IYAV…VVNG), and 560–606 (QLYA…VMRA).

It functions in the pathway protein modification; protein ubiquitination. Functionally, probable substrate-specific adapter of an E3 ubiquitin-protein ligase complex which mediates the ubiquitination and subsequent proteasomal degradation of target proteins. May have a role in synapse differentiation and growth. The protein is Kelch-like protein diablo of Drosophila virilis (Fruit fly).